The sequence spans 429 residues: Glutamyl-tRNA reductase (429 aa).

Substrate contacts are provided by residues 49–52, S107, 112–114, and Q118; these read TCNR and EPQ. C50 serves as the catalytic Nucleophile. An NADP(+)-binding site is contributed by 187 to 192; the sequence is GAGKTI.

It belongs to the glutamyl-tRNA reductase family. In terms of assembly, homodimer.

It catalyses the reaction (S)-4-amino-5-oxopentanoate + tRNA(Glu) + NADP(+) = L-glutamyl-tRNA(Glu) + NADPH + H(+). The protein operates within porphyrin-containing compound metabolism; protoporphyrin-IX biosynthesis; 5-aminolevulinate from L-glutamyl-tRNA(Glu): step 1/2. Catalyzes the NADPH-dependent reduction of glutamyl-tRNA(Glu) to glutamate 1-semialdehyde (GSA). The chain is Glutamyl-tRNA reductase from Marinobacter nauticus (strain ATCC 700491 / DSM 11845 / VT8) (Marinobacter aquaeolei).